A 519-amino-acid polypeptide reads, in one-letter code: AarF domain-containing protein kinase 1 (519 aa).

Residues 145–481 (SFEDTPLGAA…SLYRRVHISL (337 aa)) enclose the Protein kinase domain. Residues 151–159 (LGAASLAQV) and Lys173 contribute to the ATP site. The active-site Proton acceptor is Asp305.

It belongs to the protein kinase superfamily. ADCK protein kinase family.

The protein localises to the mitochondrion. Its function is as follows. Appears to be essential for maintaining mitochondrial cristae formation and mitochondrial function by acting via YME1L1 in a kinase-independent manner to regulate essential mitochondrial structural proteins OPA1 and IMMT. The action of this enzyme is not yet clear. It is not known if it has protein kinase activity and what type of substrate it would phosphorylate (Ser, Thr or Tyr). This Gallus gallus (Chicken) protein is AarF domain-containing protein kinase 1 (ADCK1).